We begin with the raw amino-acid sequence, 673 residues long: UvrABC system protein B (673 aa).

The 389-residue stretch at 26-414 (EGLEDGLAHQ…GGDVVDQVVR (389 aa)) folds into the Helicase ATP-binding domain. 39–46 (GVTGSGKT) serves as a coordination point for ATP. The Beta-hairpin signature appears at 92-115 (YYDYYQPEAYVPSSDTFIEKDASV). Residues 431-597 (QVDDLLSEIR…GLNKKVVDIL (167 aa)) form the Helicase C-terminal domain. A UVR domain is found at 633–668 (LQKIHELEGLMMQHAQNLEFEEAAQIRDQLHQLREL).

It belongs to the UvrB family. Forms a heterotetramer with UvrA during the search for lesions. Interacts with UvrC in an incision complex.

The protein localises to the cytoplasm. Functionally, the UvrABC repair system catalyzes the recognition and processing of DNA lesions. A damage recognition complex composed of 2 UvrA and 2 UvrB subunits scans DNA for abnormalities. Upon binding of the UvrA(2)B(2) complex to a putative damaged site, the DNA wraps around one UvrB monomer. DNA wrap is dependent on ATP binding by UvrB and probably causes local melting of the DNA helix, facilitating insertion of UvrB beta-hairpin between the DNA strands. Then UvrB probes one DNA strand for the presence of a lesion. If a lesion is found the UvrA subunits dissociate and the UvrB-DNA preincision complex is formed. This complex is subsequently bound by UvrC and the second UvrB is released. If no lesion is found, the DNA wraps around the other UvrB subunit that will check the other stand for damage. The chain is UvrABC system protein B from Shigella dysenteriae serotype 1 (strain Sd197).